We begin with the raw amino-acid sequence, 239 residues long: Probable transcriptional regulatory protein BPUM_0743 (239 aa).

This sequence belongs to the TACO1 family. YeeN subfamily.

It localises to the cytoplasm. In Bacillus pumilus (strain SAFR-032), this protein is Probable transcriptional regulatory protein BPUM_0743.